The sequence spans 253 residues: (S)-2-haloacid dehalogenase (253 aa).

Aspartate 8 serves as the catalytic Nucleophile. An (S)-2-haloacid-binding positions include alanine 9–tyrosine 10, arginine 39, and serine 114–asparagine 115. Residues serine 171–aspartate 176 are important for catalytic activity.

The protein belongs to the HAD-like hydrolase superfamily. S-2-haloalkanoic acid dehalogenase family. In terms of assembly, homodimer.

The catalysed reaction is an (S)-2-haloacid + H2O = a (2R)-2-hydroxycarboxylate + a halide anion + H(+). The enzyme catalyses (S)-2-chloropropanoate + H2O = (R)-lactate + chloride + H(+). Catalyzes the hydrolytic dehalogenation of small (S)-2-haloalkanoic acids to yield the corresponding (R)-2-hydroxyalkanoic acids. Acts on acids of short chain lengths, C(2) to C(4), with inversion of configuration at C-2. Active with 2-halogenated carboxylic acids and converts only the S-isomer (or L-isomer) of 2-chloropropionic acid with inversion of configuration to produce R-lactate (or D-isomer). In Xanthobacter autotrophicus, this protein is (S)-2-haloacid dehalogenase.